Here is a 248-residue protein sequence, read N- to C-terminus: Tryptophan synthase alpha chain (248 aa).

Residues Glu36 and Asp47 each act as proton acceptor in the active site.

This sequence belongs to the TrpA family. In terms of assembly, tetramer of two alpha and two beta chains.

The enzyme catalyses (1S,2R)-1-C-(indol-3-yl)glycerol 3-phosphate + L-serine = D-glyceraldehyde 3-phosphate + L-tryptophan + H2O. It participates in amino-acid biosynthesis; L-tryptophan biosynthesis; L-tryptophan from chorismate: step 5/5. Functionally, the alpha subunit is responsible for the aldol cleavage of indoleglycerol phosphate to indole and glyceraldehyde 3-phosphate. The chain is Tryptophan synthase alpha chain from Pyrococcus furiosus (strain ATCC 43587 / DSM 3638 / JCM 8422 / Vc1).